The chain runs to 243 residues: Peptidyl-tRNA hydrolase (243 aa).

TRNA is bound at residue Tyr14. His19 serves as the catalytic Proton acceptor. TRNA contacts are provided by Tyr64, Asn66, and Asn112. A compositionally biased stretch (basic and acidic residues) spans 190 to 207 (KAEEEKPRKEGKDGEKKP). Residues 190–243 (KAEEEKPRKEGKDGEKKPAGQSHIRQARSSNQPKLPATGPMAEMLKKMFGNKGE) are disordered. Positions 212–222 (HIRQARSSNQP) are enriched in polar residues.

Belongs to the PTH family. In terms of assembly, monomer.

It is found in the cytoplasm. It carries out the reaction an N-acyl-L-alpha-aminoacyl-tRNA + H2O = an N-acyl-L-amino acid + a tRNA + H(+). Hydrolyzes ribosome-free peptidyl-tRNAs (with 1 or more amino acids incorporated), which drop off the ribosome during protein synthesis, or as a result of ribosome stalling. In terms of biological role, catalyzes the release of premature peptidyl moieties from peptidyl-tRNA molecules trapped in stalled 50S ribosomal subunits, and thus maintains levels of free tRNAs and 50S ribosomes. The protein is Peptidyl-tRNA hydrolase of Rhizobium etli (strain CIAT 652).